A 315-amino-acid polypeptide reads, in one-letter code: Ribosomal protein L11 methyltransferase (315 aa).

S-adenosyl-L-methionine-binding residues include T163, G185, D207, and N249.

This sequence belongs to the methyltransferase superfamily. PrmA family.

Its subcellular location is the cytoplasm. It catalyses the reaction L-lysyl-[protein] + 3 S-adenosyl-L-methionine = N(6),N(6),N(6)-trimethyl-L-lysyl-[protein] + 3 S-adenosyl-L-homocysteine + 3 H(+). Methylates ribosomal protein L11. In Lactobacillus helveticus (strain DPC 4571), this protein is Ribosomal protein L11 methyltransferase.